The primary structure comprises 143 residues: Small ribosomal subunit protein uS11c (143 aa).

Belongs to the universal ribosomal protein uS11 family. As to quaternary structure, part of the 30S ribosomal subunit.

It is found in the plastid. It localises to the chloroplast. This is Small ribosomal subunit protein uS11c from Saccharum officinarum (Sugarcane).